Consider the following 176-residue polypeptide: Alkyl hydroperoxide reductase AhpD (176 aa).

The active-site Proton donor is Cys131. The cysteines at positions 131 and 134 are disulfide-linked. The active-site Cysteine sulfenic acid (-SOH) intermediate is the Cys134.

This sequence belongs to the AhpD family.

It carries out the reaction N(6)-[(R)-dihydrolipoyl]-L-lysyl-[lipoyl-carrier protein] + a hydroperoxide = N(6)-[(R)-lipoyl]-L-lysyl-[lipoyl-carrier protein] + an alcohol + H2O. Functionally, antioxidant protein with alkyl hydroperoxidase activity. Required for the reduction of the AhpC active site cysteine residues and for the regeneration of the AhpC enzyme activity. The sequence is that of Alkyl hydroperoxide reductase AhpD from Methylobacterium sp. (strain 4-46).